The chain runs to 322 residues: tRNA uridine(34) hydroxylase (322 aa).

The Rhodanese domain occupies 125 to 219 (QDPDTIVIDA…YGKDPEVKGQ (95 aa)). Catalysis depends on Cys-179, which acts as the Cysteine persulfide intermediate.

Belongs to the TrhO family.

The catalysed reaction is uridine(34) in tRNA + AH2 + O2 = 5-hydroxyuridine(34) in tRNA + A + H2O. Functionally, catalyzes oxygen-dependent 5-hydroxyuridine (ho5U) modification at position 34 in tRNAs. The chain is tRNA uridine(34) hydroxylase from Bacillus velezensis (strain DSM 23117 / BGSC 10A6 / LMG 26770 / FZB42) (Bacillus amyloliquefaciens subsp. plantarum).